Here is a 223-residue protein sequence, read N- to C-terminus: Ribonuclease HII (223 aa).

The region spanning 32–223 (LYIAGVDEVG…LKKRYRDYMS (192 aa)) is the RNase H type-2 domain. Residues aspartate 38, glutamate 39, and aspartate 130 each contribute to the a divalent metal cation site.

This sequence belongs to the RNase HII family. Requires Mn(2+) as cofactor. Mg(2+) is required as a cofactor.

Its subcellular location is the cytoplasm. The catalysed reaction is Endonucleolytic cleavage to 5'-phosphomonoester.. In terms of biological role, endonuclease that specifically degrades the RNA of RNA-DNA hybrids. The chain is Ribonuclease HII from Bartonella henselae (strain ATCC 49882 / DSM 28221 / CCUG 30454 / Houston 1) (Rochalimaea henselae).